The sequence spans 698 residues: MGKTERKKELLELFEYEKIKGDVSYSSIMKKAGGNGKGFLDRYFALHRNYILYYKLGKSSLKPDDKQEPQGYINLMDCNPDDTKEIAPLMFQISHKHRTYIVKAKDESSMKQFLTLLIARIRSLEKIDIDKLGCTVVVLTKVKKFREVLTNPLILPDRVSPEMAEEWVKQMKNYNASFNLADPFIKQVEQISEFCRGEVKEYIDWFGGPEGPRLAMIRCEETVLSNWVEYINKTSSEITTYQDNRFFREDFKDIAVHLKNMTTFIDCYNDYMIHCRKYNNNKPNTKFLEEKQTFKEYIEKFIPKVASCNDVSLNQFYDRSLIQSSDGIVTINTSGIKKTLINQSNIISITSTTTTTTTTTTTTCSMPNMSNLIHSLDHTNLNIIDLNHSKSQQQLHPPPSPHHQHLHHQIVSNSKDFNISVSSNNFNDGNSEFPNLDINCDFDLTSASNLSSPILSSEVPSNVVDPIGSGQGGGGSGGGGVTAVTEEAINEKWHFDCNTSMIFKPPSEDGRNEGSNMSTSSITSKMSLSLNGGFDMKWVYQCGYFKSKNMGSISWNGKHWCWSHPRTSYKIKYIWDPTKQSFLNIPFKSRVGATGGGSVPSSQSTNNLQSSTSSMSSLSSSSTSTTKRSHPTTLYPDYQFKDNLLTPIIIEGRHQPSLTLIDSPLTIPNACLLTIAMTQYIQDALIHLSLGPKVLSSK.

The PH domain maps to 22–122 (DVSYSSIMKK…FLTLLIARIR (101 aa)). The disordered stretch occupies residues 594-630 (TGGGSVPSSQSTNNLQSSTSSMSSLSSSSTSTTKRSH). Residues 601 to 626 (SSQSTNNLQSSTSSMSSLSSSSTSTT) are compositionally biased toward low complexity.

Its subcellular location is the cytoplasm. Couples activated G protein to adenylyl cyclase signal transduction from surface cAMP receptor. Pianissimo a cytosolic regulator and CRAC, are both essential for activation of the enzyme adenylyl cyclase. Pianissimo and CRAC do not function redundantly. Both proteins are integral components of the adenylyl cyclase activation pathway. The sequence is that of Protein CRAC (dagA) from Dictyostelium discoideum (Social amoeba).